Consider the following 338-residue polypeptide: MLSKNVHTTDVVIVGAGPVGLFAVFQAGMLEMKCHVVDALDCIGGQCVTLYPDKPIYDIPAYPVITAAELIEQLKQQSAPFDTVYHLGQQVIGCKIDNDMITITTSAEQVICAKSLIIAAGCGAFKYKRLTLDNIEAFENKTVFYSVKDKNKFINKKVVIAGGGDSAIDWTLLLSDVAEVIYLVHRRENFRCAPHSLNQIKKLAECGKVQMIVPYQLAKLTGENGLLQEVLVTNFDGGAQTLPADYLLAFFGLAADLGPIHKWGLKTDLRRIEVNSITYETTIPGIYAIGDVASYPGKLKLILTGFAEAATAMSHCYQRVFGKKMHFQYSTVKGVLRS.

Residues Asp38, Gln46, Tyr51, Val91, Phe125, Asp291, and Thr331 each coordinate FAD.

The protein belongs to the ferredoxin--NADP reductase type 2 family. In terms of assembly, homodimer. The cofactor is FAD.

It catalyses the reaction 2 reduced [2Fe-2S]-[ferredoxin] + NADP(+) + H(+) = 2 oxidized [2Fe-2S]-[ferredoxin] + NADPH. The chain is Ferredoxin--NADP reductase from Orientia tsutsugamushi (strain Ikeda) (Rickettsia tsutsugamushi).